Consider the following 147-residue polypeptide: Cytochrome c-type biogenesis protein CcmE (147 aa).

The Cytoplasmic portion of the chain corresponds to 1–7 (MTRKQKR). A helical; Signal-anchor for type II membrane protein membrane pass occupies residues 8-28 (LSVIVGGLAFLGAATGLTFYA). The Periplasmic portion of the chain corresponds to 29–147 (LGQKASYFYM…KGVWQESKSE (119 aa)). Heme is bound by residues His122 and Tyr126.

It belongs to the CcmE/CycJ family.

It localises to the cell inner membrane. Functionally, heme chaperone required for the biogenesis of c-type cytochromes. Transiently binds heme delivered by CcmC and transfers the heme to apo-cytochromes in a process facilitated by CcmF and CcmH. The chain is Cytochrome c-type biogenesis protein CcmE from Mesorhizobium japonicum (strain LMG 29417 / CECT 9101 / MAFF 303099) (Mesorhizobium loti (strain MAFF 303099)).